Here is a 956-residue protein sequence, read N- to C-terminus: Glutamate receptor ionotropic, kainate 4 (956 aa).

Positions 1–20 (MPRVSAPLVLLPAWLLMVAC) are cleaved as a signal peptide. The Extracellular segment spans residues 21–545 (SPHSLRIAAI…YFSFLDPFSP (525 aa)). Asn-158, Asn-220, Asn-272, Asn-286, Asn-323, Asn-408, Asn-415, and Asn-479 each carry an N-linked (GlcNAc...) asparagine glycan. 3 residues coordinate L-glutamate: Gly-500, Thr-502, and Arg-507. Residues 546 to 566 (GVWLFMLLAYLAVSCVLFLVA) form a helical membrane-spanning segment. Over 567–623 (RLTPYEWYSPHPCAQGRCNLLVNQYSLGNSLWFPVGGFMQQGSTIAPRALSTRCVSG) the chain is Cytoplasmic. A helical membrane pass occupies residues 624–644 (VWWAFTLIIISSYTANLAAFL). The Extracellular portion of the chain corresponds to 645 to 804 (TVQRMEVPIE…HRAKGLGMEN (160 aa)). L-glutamate is bound by residues Ser-674, Ser-675, and Glu-723. The N-linked (GlcNAc...) asparagine glycan is linked to Asn-736. A helical transmembrane segment spans residues 805-825 (IGGIFVVLICGLIVAIFMAML). At 826–956 (EFLWTLRHSE…DKTTNSSEPE (131 aa)) the chain is on the cytoplasmic side. The segment at 931-956 (LRARPSPARSEESLEWDKTTNSSEPE) is disordered. The segment covering 939 to 948 (RSEESLEWDK) has biased composition (basic and acidic residues).

It belongs to the glutamate-gated ion channel (TC 1.A.10.1) family. GRIK4 subfamily. Homodimer. Can form functional heteromeric receptors with GRIK1, GRIK2 and GRIK3 subunits. Forms a heteromeric complex with GRIK2. In terms of tissue distribution, expressed in the hippocampus and cerebellum (at protein level).

Its subcellular location is the cell membrane. The protein localises to the postsynaptic cell membrane. It localises to the presynaptic cell membrane. In terms of biological role, ionotropic glutamate receptor that functions as a cation-permeable ligand-gated ion channel. Cannot form functional channels on its own and produces channel activity only in heteromeric assembly with GRIK1, GRIK2 and GRIK3 subunits. The sequence is that of Glutamate receptor ionotropic, kainate 4 (Grik4) from Mus musculus (Mouse).